The primary structure comprises 248 residues: PF03932 family protein CutC (248 aa).

It belongs to the CutC family. As to quaternary structure, homodimer.

It localises to the cytoplasm. The sequence is that of PF03932 family protein CutC from Salmonella paratyphi A (strain AKU_12601).